Reading from the N-terminus, the 240-residue chain is Uridylate kinase (240 aa).

Residue K13–G16 coordinates ATP. Positions G21 to G26 are involved in allosteric activation by GTP. Residue G55 participates in UMP binding. ATP-binding residues include G56 and R60. UMP is bound by residues D75 and I136–T143. 3 residues coordinate ATP: N164, Y170, and D173.

This sequence belongs to the UMP kinase family. In terms of assembly, homohexamer.

Its subcellular location is the cytoplasm. It carries out the reaction UMP + ATP = UDP + ADP. It functions in the pathway pyrimidine metabolism; CTP biosynthesis via de novo pathway; UDP from UMP (UMPK route): step 1/1. Allosterically activated by GTP. Inhibited by UTP. In terms of biological role, catalyzes the reversible phosphorylation of UMP to UDP. This is Uridylate kinase from Staphylococcus saprophyticus subsp. saprophyticus (strain ATCC 15305 / DSM 20229 / NCIMB 8711 / NCTC 7292 / S-41).